The following is an 819-amino-acid chain: MKKVFFLILILNCVVGALSNKNICKISLLLSGDYNDIGVNYMFNYARTQVEKNLNINSIVFTNLENNQNAINNAIIESINKGSNFLISTINSHSNFIINYSRLYKNKEIFWLIKGNDNERPIPDDLPRVKILNINSDLSFYYLGFISSLISKTGKIGFISTKNIETDYQRLTNAFYIGAINSNPNITFLVCSNNFNNQNNNKKISYKISKLLISKGVDFIGSDQDDNSIQLAVIDNGGIGLGLTGFEYSKIYNDKFPFSFKLEWSQLLIDITNTIINGSWVDYDIIYITSFSRLNGTTNFTPEIEPIINYNFIPKIYQKQINDEINKLKNHSTNYYFPHLCNNLFNNIYNQKQTNGCITNEQFSNSHLLNASNIKIIDNKEILEFVDSYSNSIKISILSVSIFCIFICVLGMIFITVLRNARILKSSSPSFLLLILFGCIVIFTGCILFSQPATDKTCQGRVWLLSIGYTIFLGSLLIKNWRVWLLFDNKKLRKRSITNWKLYPWVAGILVVDVLILALWQGLGDIKSESRIIGTSFYQYTNVCTNNDQGSIALYILLAFHGLKLLGTCFISFKIKLVDIEEFNESKPITTSVFIILFCIFTIILLIAPSSSSSSASSPQPIASLETIICICSVTTTAISIGLLFGDKIYFITTQGLGLNQTFAKSSSFSLDKKDCDDDDDDSSDGSDHSNSNKNKNKNKNRNQSEKKKRPNSIKPIGLFSKSKQESVVFNPPSNNDLTNELALPIEGIKEGHGHDSENNDEYEHHEDEDHEYEGEGEDEDHEDEYEVENDIEQEQEQESSNISISTKKNNENEIISDT.

The first 19 residues, 1–19, serve as a signal peptide directing secretion; that stretch reads MKKVFFLILILNCVVGALS. Residues 20 to 394 lie on the Extracellular side of the membrane; the sequence is NKNICKISLL…FVDSYSNSIK (375 aa). N-linked (GlcNAc...) asparagine glycosylation is found at Asn-99, Asn-185, Asn-277, Asn-295, Asn-330, and Asn-370. The helical transmembrane segment at 395-415 threads the bilayer; the sequence is ISILSVSIFCIFICVLGMIFI. The Cytoplasmic portion of the chain corresponds to 416 to 428; it reads TVLRNARILKSSS. Residues 429–449 traverse the membrane as a helical segment; it reads PSFLLLILFGCIVIFTGCILF. Over 450–457 the chain is Extracellular; the sequence is SQPATDKT. Residues 458–478 traverse the membrane as a helical segment; the sequence is CQGRVWLLSIGYTIFLGSLLI. At 479 to 503 the chain is on the cytoplasmic side; sequence KNWRVWLLFDNKKLRKRSITNWKLY. A helical membrane pass occupies residues 504-524; that stretch reads PWVAGILVVDVLILALWQGLG. Residues 525 to 550 lie on the Extracellular side of the membrane; the sequence is DIKSESRIIGTSFYQYTNVCTNNDQG. A helical membrane pass occupies residues 551 to 571; sequence SIALYILLAFHGLKLLGTCFI. The Cytoplasmic portion of the chain corresponds to 572 to 587; sequence SFKIKLVDIEEFNESK. A helical membrane pass occupies residues 588-608; sequence PITTSVFIILFCIFTIILLIA. Residues 609-624 lie on the Extracellular side of the membrane; the sequence is PSSSSSSASSPQPIAS. Residues 625-645 form a helical membrane-spanning segment; that stretch reads LETIICICSVTTTAISIGLLF. Residues 646–819 are Cytoplasmic-facing; it reads GDKIYFITTQ…NNENEIISDT (174 aa). Positions 674-819 are disordered; sequence KDCDDDDDDS…NNENEIISDT (146 aa). A compositionally biased stretch (basic residues) spans 695–712; it reads NKNKNKNRNQSEKKKRPN. Positions 726–739 are enriched in polar residues; it reads ESVVFNPPSNNDLT. Residues 748–768 show a composition bias toward basic and acidic residues; sequence GIKEGHGHDSENNDEYEHHED. The segment covering 769-798 has biased composition (acidic residues); it reads EDHEYEGEGEDEDHEDEYEVENDIEQEQEQ. Low complexity predominate over residues 799-808; it reads ESSNISISTK.

This sequence in the N-terminal section; belongs to the BMP lipoprotein family. The protein in the C-terminal section; belongs to the G-protein coupled receptor 3 family. GABA-B receptor subfamily.

Its subcellular location is the membrane. This Dictyostelium discoideum (Social amoeba) protein is Metabotropic glutamate receptor-like protein O (grlO).